Consider the following 491-residue polypeptide: Aspartyl/glutamyl-tRNA(Asn/Gln) amidotransferase subunit B (491 aa).

The protein belongs to the GatB/GatE family. GatB subfamily. Heterotrimer of A, B and C subunits.

It carries out the reaction L-glutamyl-tRNA(Gln) + L-glutamine + ATP + H2O = L-glutaminyl-tRNA(Gln) + L-glutamate + ADP + phosphate + H(+). The catalysed reaction is L-aspartyl-tRNA(Asn) + L-glutamine + ATP + H2O = L-asparaginyl-tRNA(Asn) + L-glutamate + ADP + phosphate + 2 H(+). Functionally, allows the formation of correctly charged Asn-tRNA(Asn) or Gln-tRNA(Gln) through the transamidation of misacylated Asp-tRNA(Asn) or Glu-tRNA(Gln) in organisms which lack either or both of asparaginyl-tRNA or glutaminyl-tRNA synthetases. The reaction takes place in the presence of glutamine and ATP through an activated phospho-Asp-tRNA(Asn) or phospho-Glu-tRNA(Gln). This chain is Aspartyl/glutamyl-tRNA(Asn/Gln) amidotransferase subunit B, found in Parasynechococcus marenigrum (strain WH8102).